A 303-amino-acid chain; its full sequence is Probable cell division protein WhiA (303 aa).

Positions 272 to 303 form a DNA-binding region, H-T-H motif; sequence SIQQVADALEFPITKSGVNHRLRKINKIADDL.

This sequence belongs to the WhiA family.

In terms of biological role, involved in cell division and chromosome segregation. This is Probable cell division protein WhiA from Streptococcus pyogenes serotype M1.